We begin with the raw amino-acid sequence, 69 residues long: Toxin Tma3 (69 aa).

An LCN-type CS-alpha/beta domain is found at 2 to 66; it reads KDDYPVDTAK…SPTKKSGRCN (65 aa). 4 disulfides stabilise this stretch: C14-C65, C18-C41, C27-C48, and C31-C50.

Belongs to the long (4 C-C) scorpion toxin superfamily. Sodium channel inhibitor family. Expressed by the venom gland.

It localises to the secreted. In terms of biological role, inhibits voltage-gated sodium channels (Nav). This toxin shows insect lethality against crickets. The protein is Toxin Tma3 of Tityus macrochirus (Scorpion).